A 337-amino-acid polypeptide reads, in one-letter code: Transcription factor HBI1 (337 aa).

The segment at 119-180 (VALKNKRKPE…SKGASENQKL (62 aa)) is disordered. The span at 126-151 (KPEVKTREEQKTEKKIKVEAETESSM) shows a compositional bias: basic and acidic residues. Over residues 152–165 (KGKSNMGNTEASSD) the composition is skewed to polar residues. One can recognise a bHLH domain in the interval 191 to 241 (QATDRHSLAERARREKISKKMKYLQDIVPGCNKVTGKAGMLDEIINYVQCL).

In terms of assembly, homodimer. Interacts with IBH1. In terms of tissue distribution, highly expressed in hypocotyls and cotyledons. Expressed in leaves, stems, and flowers.

It is found in the nucleus. Its function is as follows. Atypical bHLH transcription factor that acts as a positive regulator of cell elongation downstream of multiple external and endogenous signals by direct binding to the promoters and activation of the two expansin genes EXPA1 and EXPA8, encoding cell wall loosening enzymes. Transcriptional activity is inhibited when binding to the bHLH transcription factor IBH1. In Arabidopsis thaliana (Mouse-ear cress), this protein is Transcription factor HBI1 (HBI1).